Consider the following 291-residue polypeptide: Small ribosomal subunit biogenesis GTPase RsgA (291 aa).

The region spanning 63 to 221 is the CP-type G domain; it reads KNELKRPPVS…IADTPGFSAL (159 aa). GTP-binding positions include 112-115 and 164-172; these read TKKD and GQSGVGKST. Residues C245, C250, H252, and C258 each contribute to the Zn(2+) site.

The protein belongs to the TRAFAC class YlqF/YawG GTPase family. RsgA subfamily. As to quaternary structure, monomer. Associates with 30S ribosomal subunit, binds 16S rRNA. It depends on Zn(2+) as a cofactor.

It is found in the cytoplasm. Functionally, one of several proteins that assist in the late maturation steps of the functional core of the 30S ribosomal subunit. Helps release RbfA from mature subunits. May play a role in the assembly of ribosomal proteins into the subunit. Circularly permuted GTPase that catalyzes slow GTP hydrolysis, GTPase activity is stimulated by the 30S ribosomal subunit. The sequence is that of Small ribosomal subunit biogenesis GTPase RsgA from Staphylococcus aureus (strain Mu50 / ATCC 700699).